The following is a 759-amino-acid chain: 1,4-alpha-glucan branching enzyme GlgB (759 aa).

A disordered region spans residues 1–21; the sequence is MAKTKGLPKDTAVTPSPHLRP. Asp422 serves as the catalytic Nucleophile. The active-site Proton donor is the Glu475.

Belongs to the glycosyl hydrolase 13 family. GlgB subfamily. Monomer.

The catalysed reaction is Transfers a segment of a (1-&gt;4)-alpha-D-glucan chain to a primary hydroxy group in a similar glucan chain.. The protein operates within glycan biosynthesis; glycogen biosynthesis. In terms of biological role, catalyzes the formation of the alpha-1,6-glucosidic linkages in glycogen by scission of a 1,4-alpha-linked oligosaccharide from growing alpha-1,4-glucan chains and the subsequent attachment of the oligosaccharide to the alpha-1,6 position. This Mycobacterium sp. (strain JLS) protein is 1,4-alpha-glucan branching enzyme GlgB.